We begin with the raw amino-acid sequence, 1025 residues long: AP-2 complex subunit alpha (1025 aa).

Positions 713–737 (RSIMVPMPPPSRRNTIDDVNSKISS) are disordered. Thr-727 is subject to Phosphothreonine. Residue Ser-733 is modified to Phosphoserine.

This sequence belongs to the adaptor complexes large subunit family. Adaptor protein complex 2 (AP-2) is a heterotetramer composed of two large adaptins (alpha-type subunit APL3 and beta-type subunit APL1), a medium chain (mu-type subunit APM4) and a small adaptin (sigma-type subunit APS2).

It localises to the cell membrane. It is found in the membrane. Its subcellular location is the coated pit. Functionally, adaptins are components of the adaptor complexes which link clathrin to receptors in coated vesicles. Clathrin-associated protein complexes are believed to interact with the cytoplasmic tails of membrane proteins, leading to their selection and concentration. Alpha adaptin is a subunit of the plasma membrane adaptor. Facilitates interaction between APL1 and APS2. This is AP-2 complex subunit alpha (APL3) from Saccharomyces cerevisiae (strain ATCC 204508 / S288c) (Baker's yeast).